Here is a 205-residue protein sequence, read N- to C-terminus: Superoxide dismutase [Mn] (205 aa).

Histidine 30, histidine 78, aspartate 166, and histidine 170 together coordinate Mn(2+).

This sequence belongs to the iron/manganese superoxide dismutase family. Homodimer. It depends on Mn(2+) as a cofactor.

It carries out the reaction 2 superoxide + 2 H(+) = H2O2 + O2. In terms of biological role, destroys superoxide anion radicals which are normally produced within the cells and which are toxic to biological systems. The chain is Superoxide dismutase [Mn] (sodA) from Chlamydia muridarum (strain MoPn / Nigg).